Here is a 113-residue protein sequence, read N- to C-terminus: UPF0102 protein SUN_0231 (113 aa).

It belongs to the UPF0102 family.

The sequence is that of UPF0102 protein SUN_0231 from Sulfurovum sp. (strain NBC37-1).